We begin with the raw amino-acid sequence, 707 residues long: Drebrin (707 aa).

A2 carries the post-translational modification N-acetylalanine. Positions 3 to 134 constitute an ADF-H domain; that stretch reads GVSFSGHRLE…DAGAIGQRLS (132 aa). S141 and S142 each carry phosphoserine. Residues 209–236 show a composition bias toward basic and acidic residues; that stretch reads ERMEQERQEQEERERRYREREQQIEEHR. Disordered regions lie at residues 209-438, 452-497, 531-557, 582-609, and 630-707; these read ERME…VCKE, AEEP…TSVA, WPGNGEEASTPQAEPRVPTPPSGAEAS, LLNFDELPEPPATFCDPEEEAEGEPLAA, and LEPE…EGGD. S241 carries the post-translational modification Phosphoserine. A compositionally biased stretch (basic and acidic residues) spans 288 to 298; sequence DNPREFFRQQE. Residues 329–343 show a composition bias toward low complexity; sequence SDSGPSSSSSSSSSP. The residue at position 342 (S342) is a Phosphoserine. Residues 355-364 are compositionally biased toward polar residues; sequence RTPNLSSSLP. Residues T377 and T381 each carry the phosphothreonine modification. Over residues 380–395 the composition is skewed to polar residues; the sequence is PTRSPSDSSTASTPIT. A phosphoserine mark is found at S383, S385, and S391. Phosphothreonine is present on T392. Residues 409-420 are compositionally biased toward pro residues; it reads QPPPPPPPPPPA. Basic and acidic residues predominate over residues 428-438; sequence PRLDGEEVCKE. Residue S467 is modified to Phosphoserine. The residue at position 549 (T549) is a Phosphothreonine. Positions 639 to 652 are enriched in polar residues; that stretch reads NGETTQKEGTQQAS. Phosphoserine is present on S659. Over residues 695–707 the composition is skewed to acidic residues; sequence PVPEEEEGFEGGD.

As to quaternary structure, interacts with RUFY. Interacts with CXCR4; this interaction is enhanced by antigenic stimulation. Interacts (via ADF-H domain) with ZMYND8 (via N-terminus); the interaction leads to sequestering of ZMYND8 in the cytoplasm. ISGylated. In terms of tissue distribution, brain neurons.

It is found in the cytoplasm. The protein localises to the cell projection. The protein resides in the dendrite. Its subcellular location is the cell cortex. It localises to the cell junction. It is found in the growth cone. Actin cytoskeleton-organizing protein that plays a role in the formation of cell projections. Required for actin polymerization at immunological synapses (IS) and for the recruitment of the chemokine receptor CXCR4 to IS. Plays a role in dendritic spine morphogenesis and organization, including the localization of the dopamine receptor DRD1 to the dendritic spines. Involved in memory-related synaptic plasticity in the hippocampus. The protein is Drebrin (Dbn1) of Rattus norvegicus (Rat).